The primary structure comprises 308 residues: rRNA 2'-O-methyltransferase fibrillarin 1 (308 aa).

A disordered region spans residues 1–68; it reads MRPPVTGGRG…PRGGMKGGSK (68 aa). The segment covering 22-35 has biased composition (gly residues); that stretch reads GRGFGGGRSFGGGR. Residues 42–52 are compositionally biased toward basic residues; that stretch reads SGPRGRGRGAP. The span at 53 to 65 shows a compositional bias: gly residues; the sequence is RGRGGPPRGGMKG. S-adenosyl-L-methionine-binding positions include 156–157, 175–176, 200–201, and 220–223; these read TT, EF, DA, and DVAQ.

The protein belongs to the methyltransferase superfamily. Fibrillarin family. Component of box C/D small nucleolar ribonucleoprotein (snoRNP) particles. Interacts with SKP1A. Expressed in roots, leaves and flowers. Expressed in stems.

The protein localises to the nucleus. It localises to the nucleolus. The catalysed reaction is a ribonucleotide in rRNA + S-adenosyl-L-methionine = a 2'-O-methylribonucleotide in rRNA + S-adenosyl-L-homocysteine + H(+). It catalyses the reaction L-glutaminyl-[histone H2A] + S-adenosyl-L-methionine = N(5)-methyl-L-glutaminyl-[histone H2A] + S-adenosyl-L-homocysteine + H(+). In terms of biological role, S-adenosyl-L-methionine-dependent methyltransferase that has the ability to methylate both RNAs and proteins. Involved in pre-rRNA processing. Utilizes the methyl donor S-adenosyl-L-methionine to catalyze the site-specific 2'-hydroxyl methylation of ribose moieties in pre-ribosomal RNA. Site specificity is provided by a guide RNA that base pairs with the substrate. Methylation occurs at a characteristic distance from the sequence involved in base pairing with the guide RNA. Also acts as a protein methyltransferase by mediating methylation of 'Gln-105' of histone H2A (H2AQ105me), a modification that impairs binding of the FACT complex and is specifically present at 35S ribosomal DNA locus. Binds monophosphate phosphoinositides in vitro. This chain is rRNA 2'-O-methyltransferase fibrillarin 1, found in Arabidopsis thaliana (Mouse-ear cress).